Here is a 675-residue protein sequence, read N- to C-terminus: Vitamin K-dependent protein S (675 aa).

Positions 1–24 (MRVLGGRTGTLLACLALVLPVLEA) are cleaved as a signal peptide. The propeptide occupies 25–41 (NFLSRQHASQVLIRRRR). Residues 42 to 87 (ANTLLEETKKGNLERECIEELCNKEEAREIFENNPETEYFYPKYLG) enclose the Gla domain. A 4-carboxyglutamate mark is found at Glu47, Glu48, Glu55, Glu57, Glu60, Glu61, Glu66, Glu67, Glu70, Glu73, and Glu77. A disulfide bond links Cys58 and Cys63. 16 disulfides stabilise this stretch: Cys88–Cys113, Cys121–Cys134, Cys126–Cys143, Cys145–Cys154, Cys161–Cys175, Cys171–Cys184, Cys186–Cys199, Cys205–Cys217, Cys212–Cys226, Cys228–Cys241, Cys247–Cys256, Cys252–Cys265, Cys267–Cys282, Cys288–Cys567, Cys449–Cys475, and Cys638–Cys665. A thrombin-sensitive region spans residues 88-116 (CLGSFRAGLFTAARLSTNAYPDLRSCVNA). Positions 117–155 (ISDQCNPLPCNEDGFMTCKDGQATFTCICKSGWQGEKCE) constitute an EGF-like 1 domain. Asp136 carries the (3R)-3-hydroxyaspartate modification. In terms of domain architecture, EGF-like 2; calcium-binding spans 157-200 (DINECKDPVNINGGCSQICENTPGSYHCSCKNGFVMLSNKKDCK). A (3R)-3-hydroxyasparagine modification is found at Asn177. In terms of domain architecture, EGF-like 3; calcium-binding spans 201–242 (DVDECVLKPSICGTAVCKNIPGDFECECAEGYKYNPVSKSCD). Asn219 bears the (3R)-3-hydroxyasparagine mark. Positions 243 to 283 (DVDECAENLCAQLCVNYPGGYSCYCDGKKGFKLAQDQKSCE) constitute an EGF-like 4; calcium-binding domain. (3R)-3-hydroxyasparagine is present on Asn258. Laminin G-like domains lie at 299–475 (LLYL…NKHC) and 484–665 (YYPG…AHSC). Residues Asn499 and Asn509 are each glycosylated (N-linked (GlcNAc...) asparagine).

Post-translationally, the iron and 2-oxoglutarate dependent 3-hydroxylation of aspartate and asparagine is (R) stereospecific within EGF domains. Plasma.

It localises to the secreted. Anticoagulant plasma protein; it is a cofactor to activated protein C in the degradation of coagulation factors Va and VIIIa. It helps to prevent coagulation and stimulating fibrinolysis. The chain is Vitamin K-dependent protein S (PROS1) from Bos taurus (Bovine).